The chain runs to 177 residues: MMHLKNITAGNPKTKEQYQLTKQFNIKWLYTEDGKNWYEEQKNFQPDTLKMVYDHNGVIICIEKDVSAINPEGANVVEVPDITANRRADISGKWMFKDGVVIKRTYTEEEQRQQAENEKQSLLQLVRDKTQLWDSQLRLGIISDENKQKLTEWMLYAQKVESTDTSSLPVTFPEQPE.

The protein belongs to the tfa family.

It is found in the virion. The protein localises to the host cytoplasm. Its function is as follows. Chaperone involved in tail fiber assembly. Remains associated to the tail fiber and participates in the host receptor binding. Binds to the primary receptor. Two alternate tail fiber assembly proteins U and U' are encoded extending the host range of the virus. The protein is Tail fiber assembly protein U' (U') of Escherichia phage Mu (Bacteriophage Mu).